A 185-amino-acid polypeptide reads, in one-letter code: MKTAQELRSGNVIMVGSDPLVVQKAEYNKSGRNAAVVKMKLKNLLTGAPSESVYKADDKFEVVQLDRKEVTYSYFADPMYVFMDADYEQFEVEAENMTDALKYLEDGLQCEVVFYNGKAISVELPTTVVREVVYTEPAVKGDTSGKVMKPAKIATGFELPVPAFVEIGDKIEIDTRTDEYKNRVK.

Belongs to the elongation factor P family.

The protein localises to the cytoplasm. Its pathway is protein biosynthesis; polypeptide chain elongation. Functionally, involved in peptide bond synthesis. Stimulates efficient translation and peptide-bond synthesis on native or reconstituted 70S ribosomes in vitro. Probably functions indirectly by altering the affinity of the ribosome for aminoacyl-tRNA, thus increasing their reactivity as acceptors for peptidyl transferase. The chain is Elongation factor P from Azoarcus sp. (strain BH72).